Here is a 113-residue protein sequence, read N- to C-terminus: Ribonuclease P protein component (113 aa).

Belongs to the RnpA family. As to quaternary structure, consists of a catalytic RNA component (M1 or rnpB) and a protein subunit.

It carries out the reaction Endonucleolytic cleavage of RNA, removing 5'-extranucleotides from tRNA precursor.. RNaseP catalyzes the removal of the 5'-leader sequence from pre-tRNA to produce the mature 5'-terminus. It can also cleave other RNA substrates such as 4.5S RNA. The protein component plays an auxiliary but essential role in vivo by binding to the 5'-leader sequence and broadening the substrate specificity of the ribozyme. In Clavibacter michiganensis subsp. michiganensis (strain NCPPB 382), this protein is Ribonuclease P protein component.